A 119-amino-acid polypeptide reads, in one-letter code: Large ribosomal subunit protein bL20 (119 aa).

Belongs to the bacterial ribosomal protein bL20 family.

In terms of biological role, binds directly to 23S ribosomal RNA and is necessary for the in vitro assembly process of the 50S ribosomal subunit. It is not involved in the protein synthesizing functions of that subunit. This Saccharophagus degradans (strain 2-40 / ATCC 43961 / DSM 17024) protein is Large ribosomal subunit protein bL20.